Consider the following 328-residue polypeptide: Acetyl-coenzyme A carboxylase carboxyl transferase subunit alpha (328 aa).

A CoA carboxyltransferase C-terminal domain is found at 42–296 (SFKEQLSILK…KESLISELHF (255 aa)).

This sequence belongs to the AccA family. Acetyl-CoA carboxylase is a heterohexamer composed of biotin carboxyl carrier protein (accB), biotin carboxylase (accC) and two subunits each of ACCase subunit alpha (accA) and ACCase subunit beta (accD).

The protein localises to the plastid. It is found in the chloroplast. It catalyses the reaction N(6)-carboxybiotinyl-L-lysyl-[protein] + acetyl-CoA = N(6)-biotinyl-L-lysyl-[protein] + malonyl-CoA. It participates in lipid metabolism; malonyl-CoA biosynthesis; malonyl-CoA from acetyl-CoA: step 1/1. Its function is as follows. Component of the acetyl coenzyme A carboxylase (ACC) complex. First, biotin carboxylase catalyzes the carboxylation of biotin on its carrier protein (BCCP) and then the CO(2) group is transferred by the carboxyltransferase to acetyl-CoA to form malonyl-CoA. The sequence is that of Acetyl-coenzyme A carboxylase carboxyl transferase subunit alpha from Gracilaria tenuistipitata var. liui (Red alga).